The chain runs to 450 residues: 3-phosphoshikimate 1-carboxyvinyltransferase (450 aa).

Residues 1–25 are disordered; that stretch reads MSAHGDPKPMTARKGGALTGTAEVP. 3-phosphoshikimate contacts are provided by K28, S29, and R33. K28 provides a ligand contact to phosphoenolpyruvate. Phosphoenolpyruvate is bound by residues G101 and R129. 3-phosphoshikimate contacts are provided by S174, Q176, D327, and K354. Q176 is a binding site for phosphoenolpyruvate. D327 acts as the Proton acceptor in catalysis. Phosphoenolpyruvate contacts are provided by R358 and R403.

It belongs to the EPSP synthase family. As to quaternary structure, monomer.

It localises to the cytoplasm. It carries out the reaction 3-phosphoshikimate + phosphoenolpyruvate = 5-O-(1-carboxyvinyl)-3-phosphoshikimate + phosphate. The protein operates within metabolic intermediate biosynthesis; chorismate biosynthesis; chorismate from D-erythrose 4-phosphate and phosphoenolpyruvate: step 6/7. Catalyzes the transfer of the enolpyruvyl moiety of phosphoenolpyruvate (PEP) to the 5-hydroxyl of shikimate-3-phosphate (S3P) to produce enolpyruvyl shikimate-3-phosphate and inorganic phosphate. The chain is 3-phosphoshikimate 1-carboxyvinyltransferase from Jannaschia sp. (strain CCS1).